Here is a 304-residue protein sequence, read N- to C-terminus: Glutaminase (304 aa).

Ser63, Asn114, Glu158, Asn165, Tyr189, Tyr240, and Val258 together coordinate substrate.

Belongs to the glutaminase family. As to quaternary structure, homotetramer.

The catalysed reaction is L-glutamine + H2O = L-glutamate + NH4(+). This chain is Glutaminase, found in Shewanella baltica (strain OS155 / ATCC BAA-1091).